Reading from the N-terminus, the 236-residue chain is MSEQDATALVLFSGGQDSTTCLAWALDRFARVETIGFSYGQRHGIELDCRARLRDGIAQLRADWADKLGCEHTLDIPTLAAISETALTRDVAIEMGADGLPNTFVPGRNLVFLTFAAALAYRRGIRHIVGGMCETDYSGYPDCRDETIKALQVALSLGMARPFELHTPLMWLTKAATWQLAHDLGGRGLVDLIRDESHTCYLGERGARHDWGHGCGRCPACELRAHGWRAYVGGGA.

12–22 (FSGGQDSTTCL) is an ATP binding site. Zn(2+)-binding residues include C200, C215, C218, and C221.

Belongs to the QueC family. The cofactor is Zn(2+).

The catalysed reaction is 7-carboxy-7-deazaguanine + NH4(+) + ATP = 7-cyano-7-deazaguanine + ADP + phosphate + H2O + H(+). It functions in the pathway purine metabolism; 7-cyano-7-deazaguanine biosynthesis. In terms of biological role, catalyzes the ATP-dependent conversion of 7-carboxy-7-deazaguanine (CDG) to 7-cyano-7-deazaguanine (preQ(0)). This Bradyrhizobium sp. (strain ORS 278) protein is 7-cyano-7-deazaguanine synthase.